We begin with the raw amino-acid sequence, 206 residues long: Small ribosomal subunit protein uS4 (206 aa).

Positions 28 to 52 (YLDRRPYAPGQHGQRRGRGRPSDYS) are disordered. In terms of domain architecture, S4 RNA-binding spans 96-171 (RRLDNVVFRM…QKRRRVSPWI (76 aa)).

This sequence belongs to the universal ribosomal protein uS4 family. Part of the 30S ribosomal subunit. Contacts protein S5. The interaction surface between S4 and S5 is involved in control of translational fidelity.

Functionally, one of the primary rRNA binding proteins, it binds directly to 16S rRNA where it nucleates assembly of the body of the 30S subunit. With S5 and S12 plays an important role in translational accuracy. The chain is Small ribosomal subunit protein uS4 from Deinococcus geothermalis (strain DSM 11300 / CIP 105573 / AG-3a).